A 154-amino-acid polypeptide reads, in one-letter code: 6,7-dimethyl-8-ribityllumazine synthase (154 aa).

5-amino-6-(D-ribitylamino)uracil-binding positions include phenylalanine 22, 56–58 (AFE), and 80–82 (AVI). 85–86 (ET) is a (2S)-2-hydroxy-3-oxobutyl phosphate binding site. Catalysis depends on histidine 88, which acts as the Proton donor. Phenylalanine 113 contributes to the 5-amino-6-(D-ribitylamino)uracil binding site. Arginine 127 serves as a coordination point for (2S)-2-hydroxy-3-oxobutyl phosphate.

The protein belongs to the DMRL synthase family.

It catalyses the reaction (2S)-2-hydroxy-3-oxobutyl phosphate + 5-amino-6-(D-ribitylamino)uracil = 6,7-dimethyl-8-(1-D-ribityl)lumazine + phosphate + 2 H2O + H(+). Its pathway is cofactor biosynthesis; riboflavin biosynthesis; riboflavin from 2-hydroxy-3-oxobutyl phosphate and 5-amino-6-(D-ribitylamino)uracil: step 1/2. Catalyzes the formation of 6,7-dimethyl-8-ribityllumazine by condensation of 5-amino-6-(D-ribitylamino)uracil with 3,4-dihydroxy-2-butanone 4-phosphate. This is the penultimate step in the biosynthesis of riboflavin. The sequence is that of 6,7-dimethyl-8-ribityllumazine synthase from Thermoanaerobacter pseudethanolicus (strain ATCC 33223 / 39E) (Clostridium thermohydrosulfuricum).